The chain runs to 358 residues: Trace amine-associated receptor 7d (358 aa).

Residues 1 to 47 (MATGDDSFPWDQDSILSRDLFSATSTELCYENLNRSCVRSPYSPGPR) are Extracellular-facing. Residue N34 is glycosylated (N-linked (GlcNAc...) asparagine). Intrachain disulfides connect C37/C201 and C120/C205. A helical membrane pass occupies residues 48–68 (LILYAVFGFGAVLAVCGNLLV). Residues 69–83 (MTSILHFRQLHSPAN) lie on the Cytoplasmic side of the membrane. The helical transmembrane segment at 84–104 (FLVASLACADFLVGVMVMPFS) threads the bilayer. Residues 105-121 (MVRSVEGCWYFGESYCK) lie on the Extracellular side of the membrane. Residues 122-143 (FHSCFEGSFCYSSLFHLCFISV) traverse the membrane as a helical segment. At 144 to 166 (DRYIAVSDPLTYPTRFTASVSGK) the chain is on the cytoplasmic side. The helical transmembrane segment at 167-187 (CITFSWLLSIIYSFSLLYTGA) threads the bilayer. Over 188–212 (NDAGLEDLVSALTCVGGCQIAVNQT) the chain is Extracellular. N210 carries N-linked (GlcNAc...) asparagine glycosylation. A helical membrane pass occupies residues 213–233 (WVFINFLLFLIPTLVMITVYS). The Cytoplasmic portion of the chain corresponds to 234-274 (KIFLIAKQQAQNIEKMSKQTARASESYKDRVTKRERKAAKT). The helical transmembrane segment at 275-295 (LGIAVAAFLLSWLPYFIDSII) threads the bilayer. Residues 296–309 (DAFLGFITPTYVYE) are Extracellular-facing. A helical transmembrane segment spans residues 310–333 (ILVWIVYYNSAMNPLIYAFFYSWF). At 334–358 (RKAIKLIVSGKILRENSSTTNLFPE) the chain is on the cytoplasmic side.

This sequence belongs to the G-protein coupled receptor 1 family. In terms of tissue distribution, specifically expressed in neurons of the olfactory epithelium.

It localises to the cell membrane. In terms of biological role, olfactory receptor specific for trace amines, such as beta-phenylethylamine (beta-PEA). Trace amine compounds are enriched in animal body fluids and act on trace amine-associated receptors (TAARs) to elicit both intraspecific and interspecific innate behaviors. Ligand-binding causes a conformation change that triggers signaling via G(s)-class of G alpha proteins (GNAL or GNAS). In Mus musculus (Mouse), this protein is Trace amine-associated receptor 7d.